Reading from the N-terminus, the 262-residue chain is Flap endonuclease Xni (262 aa).

Asp-105 provides a ligand contact to Mg(2+). Residues 164-251 (SQFLDLMALA…NINLKDFRAN (88 aa)) form the 5'-3' exonuclease domain. K(+) is bound by residues Leu-172, Ala-173, Pro-181, Ile-183, and Ile-186. The interval 185–190 (GIGPKS) is interaction with DNA.

The protein belongs to the Xni family. Mg(2+) serves as cofactor. Requires K(+) as cofactor.

Has flap endonuclease activity. During DNA replication, flap endonucleases cleave the 5'-overhanging flap structure that is generated by displacement synthesis when DNA polymerase encounters the 5'-end of a downstream Okazaki fragment. The chain is Flap endonuclease Xni from Shewanella sp. (strain W3-18-1).